The sequence spans 401 residues: Argininosuccinate synthase (401 aa).

9 to 17 contributes to the ATP binding site; that stretch reads AYSGGLDTS. An L-citrulline-binding site is contributed by tyrosine 86. Residue glycine 116 coordinates ATP. Residues threonine 118, asparagine 122, and aspartate 123 each coordinate L-aspartate. Residue asparagine 122 coordinates L-citrulline. L-citrulline contacts are provided by arginine 126, serine 174, serine 183, glutamate 259, and tyrosine 271.

The protein belongs to the argininosuccinate synthase family. Type 1 subfamily. Homotetramer.

The protein resides in the cytoplasm. It catalyses the reaction L-citrulline + L-aspartate + ATP = 2-(N(omega)-L-arginino)succinate + AMP + diphosphate + H(+). It functions in the pathway amino-acid biosynthesis; L-arginine biosynthesis; L-arginine from L-ornithine and carbamoyl phosphate: step 2/3. This chain is Argininosuccinate synthase, found in Bacillus anthracis (strain A0248).